The following is a 164-amino-acid chain: uncharacterized protein (164 aa).

The BFN domain maps to 1–129; it reads MGEVRVVGIR…AVLAQAGLLI (129 aa).

This is an uncharacterized protein from Mycobacterium tuberculosis (strain CDC 1551 / Oshkosh).